The sequence spans 299 residues: Sugar transporter SWEET1 (299 aa).

The MtN3/slv 1 domain occupies 7–91 (QVLSISAITT…CVFFLIYSLP (85 aa)). The next 7 membrane-spanning stretches (helical) occupy residues 8 to 28 (VLSI…IPIC), 36 to 56 (AVGD…SFWL), 67 to 87 (MIIV…FFLI), 95 to 115 (FTCQ…WIAL), 124 to 144 (VICM…LGVV), 155 to 175 (LPMC…GNLV), and 180 to 200 (IIIP…LFVV). In terms of domain architecture, MtN3/slv 2 spans 121 to 205 (YLGVICMTFN…ALFVVLPIRE (85 aa)). The disordered stretch occupies residues 230 to 299 (RGDCIVSSPP…DPDLSSIQSP (70 aa)). Over residues 247–261 (NETRSDVEDKFDKLM) the composition is skewed to basic and acidic residues. Residues 276–299 (SMGSPPSYKSRSSSDPDLSSIQSP) are compositionally biased toward low complexity.

Belongs to the SWEET sugar transporter family.

The protein localises to the golgi apparatus membrane. It localises to the cell membrane. Its function is as follows. Mediates both low-affinity uptake and efflux of sugar across the membrane. The chain is Sugar transporter SWEET1 (swt-1) from Caenorhabditis elegans.